Consider the following 389-residue polypeptide: Dual-specificity RNA methyltransferase RlmN (389 aa).

The active-site Proton acceptor is the glutamate 94. The Radical SAM core domain maps to 134–367; sequence PRVRVTQCIS…CFVRRRRGDD (234 aa). A disulfide bridge connects residues cysteine 141 and cysteine 372. 3 residues coordinate [4Fe-4S] cluster: cysteine 148, cysteine 152, and cysteine 155. S-adenosyl-L-methionine is bound by residues 197 to 198, serine 229, 253 to 255, and asparagine 329; these read GE and SLH. Catalysis depends on cysteine 372, which acts as the S-methylcysteine intermediate.

Belongs to the radical SAM superfamily. RlmN family. [4Fe-4S] cluster serves as cofactor.

The protein localises to the cytoplasm. It catalyses the reaction adenosine(2503) in 23S rRNA + 2 reduced [2Fe-2S]-[ferredoxin] + 2 S-adenosyl-L-methionine = 2-methyladenosine(2503) in 23S rRNA + 5'-deoxyadenosine + L-methionine + 2 oxidized [2Fe-2S]-[ferredoxin] + S-adenosyl-L-homocysteine. The catalysed reaction is adenosine(37) in tRNA + 2 reduced [2Fe-2S]-[ferredoxin] + 2 S-adenosyl-L-methionine = 2-methyladenosine(37) in tRNA + 5'-deoxyadenosine + L-methionine + 2 oxidized [2Fe-2S]-[ferredoxin] + S-adenosyl-L-homocysteine. In terms of biological role, specifically methylates position 2 of adenine 2503 in 23S rRNA and position 2 of adenine 37 in tRNAs. m2A2503 modification seems to play a crucial role in the proofreading step occurring at the peptidyl transferase center and thus would serve to optimize ribosomal fidelity. This Sorangium cellulosum (strain So ce56) (Polyangium cellulosum (strain So ce56)) protein is Dual-specificity RNA methyltransferase RlmN.